Here is a 129-residue protein sequence, read N- to C-terminus: Small ribosomal subunit protein uS11 (129 aa).

Belongs to the universal ribosomal protein uS11 family. In terms of assembly, part of the 30S ribosomal subunit. Interacts with proteins S7 and S18. Binds to IF-3.

Functionally, located on the platform of the 30S subunit, it bridges several disparate RNA helices of the 16S rRNA. Forms part of the Shine-Dalgarno cleft in the 70S ribosome. This Psychrobacter arcticus (strain DSM 17307 / VKM B-2377 / 273-4) protein is Small ribosomal subunit protein uS11.